Here is a 216-residue protein sequence, read N- to C-terminus: Somatotropin (216 aa).

The signal sequence occupies residues 1–26 (MATDSRTSWLLTVSLLCLLWPQEASA). H45 contributes to the Zn(2+) binding site. C78 and C189 are oxidised to a cystine. At S131 the chain carries Phosphoserine. E198 lines the Zn(2+) pocket. C206 and C214 form a disulfide bridge.

Belongs to the somatotropin/prolactin family.

The protein localises to the secreted. Plays an important role in growth control. Its major role in stimulating body growth is to stimulate the liver and other tissues to secrete IGF1. It stimulates both the differentiation and proliferation of myoblasts. It also stimulates amino acid uptake and protein synthesis in muscle and other tissues. The polypeptide is Somatotropin (Gh1) (Mus musculus (Mouse)).